The primary structure comprises 206 residues: 2,3-bisphosphoglycerate-dependent phosphoglycerate mutase (206 aa).

Residues Arg-9–Asn-16, Thr-22–Gly-23, Arg-61, Glu-88–Tyr-91, Lys-99, Arg-115–Arg-116, and Gly-159–Asn-160 each bind substrate. Residue His-10 is the Tele-phosphohistidine intermediate of the active site. Glu-88 (proton donor/acceptor) is an active-site residue.

Belongs to the phosphoglycerate mutase family. BPG-dependent PGAM subfamily. Homodimer.

The catalysed reaction is (2R)-2-phosphoglycerate = (2R)-3-phosphoglycerate. It participates in carbohydrate degradation; glycolysis; pyruvate from D-glyceraldehyde 3-phosphate: step 3/5. Functionally, catalyzes the interconversion of 2-phosphoglycerate and 3-phosphoglycerate. The chain is 2,3-bisphosphoglycerate-dependent phosphoglycerate mutase from Azorhizobium caulinodans (strain ATCC 43989 / DSM 5975 / JCM 20966 / LMG 6465 / NBRC 14845 / NCIMB 13405 / ORS 571).